Here is a 559-residue protein sequence, read N- to C-terminus: PHD finger protein 1 (559 aa).

The Tudor domain occupies 29–86 (PRLWEGQDVLARWTDGLLYLGTIKKVDSAREVCLVQFEDDSQFLVLWKDISPAALPGE). 2 consecutive PHD-type zinc fingers follow at residues 87–142 (ELLC…CVFA) and 186–240 (QSYC…CRGG). 2 disordered regions span residues 338 to 434 (PVEL…TDAR) and 448 to 526 (HPSA…GGVS). Over residues 369 to 386 (WRSEPEPLRRRQKGKVEE) the composition is skewed to basic and acidic residues. Composition is skewed to polar residues over residues 417-426 (NQSYEGSSGY) and 449-459 (PSASTAGTSGD). Residues 481 to 515 (SSPHSVTASSSSVPALTPGFSRHSPPSPLCRSLSP) show a composition bias toward low complexity.

Belongs to the Polycomblike family. Associated component of the PRC2 complex. Interacts with p53/TP53. Interacts with CHMP1. In terms of tissue distribution, testis-specific.

The protein resides in the nucleus. The protein localises to the cytoplasm. Its subcellular location is the cytoskeleton. It is found in the microtubule organizing center. It localises to the centrosome. Functionally, polycomb group (PcG) that specifically binds histone H3 trimethylated at 'Lys-36' (H3K36me3) and recruits the PRC2 complex. Involved in DNA damage response and is recruited at double-strand breaks (DSBs). Acts by binding to H3K36me3, a mark for transcriptional activation, and recruiting the PRC2 complex: it is however unclear whether recruitment of the PRC2 complex to H3K36me3 leads to enhance or inhibit H3K27me3 methylation mediated by the PRC2 complex. According to some reports, PRC2 recruitment by PHF1 promotes H3K27me3 and subsequent gene silencing by inducing spreading of PRC2 and H3K27me3 into H3K36me3 loci. According to other reports, PHF1 recruits the PRC2 complex at double-strand breaks (DSBs) and inhibits the activity of PRC2. Regulates p53/TP53 stability and prolonges its turnover: may act by specifically binding to a methylated from of p53/TP53. This Mus musculus (Mouse) protein is PHD finger protein 1 (Phf1).